A 339-amino-acid polypeptide reads, in one-letter code: Tetraacyldisaccharide 4'-kinase (339 aa).

61–68 is an ATP binding site; sequence TAGGTGKT.

The protein belongs to the LpxK family.

It catalyses the reaction a lipid A disaccharide + ATP = a lipid IVA + ADP + H(+). Its pathway is glycolipid biosynthesis; lipid IV(A) biosynthesis; lipid IV(A) from (3R)-3-hydroxytetradecanoyl-[acyl-carrier-protein] and UDP-N-acetyl-alpha-D-glucosamine: step 6/6. Functionally, transfers the gamma-phosphate of ATP to the 4'-position of a tetraacyldisaccharide 1-phosphate intermediate (termed DS-1-P) to form tetraacyldisaccharide 1,4'-bis-phosphate (lipid IVA). The protein is Tetraacyldisaccharide 4'-kinase of Stenotrophomonas maltophilia (strain R551-3).